Here is a 46-residue protein sequence, read N- to C-terminus: Large ribosomal subunit protein bL34c (46 aa).

Positions 1-46 (MSKRTLEGSHRKKVRKSGFLSRSQSPTGRRILKARRKKGRKMLVKY) are disordered. A compositionally biased stretch (basic residues) spans 30 to 46 (RILKARRKKGRKMLVKY).

The protein belongs to the bacterial ribosomal protein bL34 family.

The protein localises to the plastid. It is found in the cyanelle. This is Large ribosomal subunit protein bL34c (rpl34) from Cyanophora paradoxa.